The primary structure comprises 451 residues: Probable M18 family aminopeptidase 1 (451 aa).

Zn(2+) contacts are provided by H93, H168, and H426.

Belongs to the peptidase M18 family. Zn(2+) serves as cofactor.

This chain is Probable M18 family aminopeptidase 1 (apeA), found in Thermotoga maritima (strain ATCC 43589 / DSM 3109 / JCM 10099 / NBRC 100826 / MSB8).